The sequence spans 370 residues: Peptidyl-prolyl cis-trans isomerase D (370 aa).

The 166-residue stretch at 11–176 (FFDISADGKP…EDWIISDCGE (166 aa)) folds into the PPIase cyclophilin-type domain. TPR repeat units lie at residues 218–251 (VTTL…LNDY), 269–302 (LSCY…EAID), and 307–340 (TKAL…SPED).

It belongs to the cyclophilin-type PPIase family. PPIase D subfamily.

It is found in the cytoplasm. It carries out the reaction [protein]-peptidylproline (omega=180) = [protein]-peptidylproline (omega=0). PPIases accelerate the folding of proteins. It catalyzes the cis-trans isomerization of proline imidic peptide bonds in oligopeptides. This Debaryomyces hansenii (strain ATCC 36239 / CBS 767 / BCRC 21394 / JCM 1990 / NBRC 0083 / IGC 2968) (Yeast) protein is Peptidyl-prolyl cis-trans isomerase D (CPR6).